The following is a 131-amino-acid chain: Metalloproteinase inhibitor (131 aa).

The first 29 residues, 1 to 29, serve as a signal peptide directing secretion; it reads MVRKRALGLAGSALTLVLGAVGFTAPAQA. 2 disulfide bridges follow: Cys33–Cys39 and Cys93–Cys98.

Functionally, inhibits microbial metallo-proteinases, such as thermolysin, but not serine, thiol, or carboxyl proteinases. The protein is Metalloproteinase inhibitor (smpI) of Streptomyces nigrescens.